Reading from the N-terminus, the 79-residue chain is Dolichyl-diphosphooligosaccharide--protein glycosyltransferase subunit TMEM258 (79 aa).

The residue at position 1 (Met-1) is an N-acetylmethionine. 2 consecutive transmembrane segments (helical) span residues 17–37 and 59–79; these read VFPH…AWFF and VASL…GIYI.

The protein belongs to the OST5 family. In terms of assembly, component of the oligosaccharyltransferase (OST) complex. OST exists in two different complex forms which contain common core subunits RPN1, RPN2, OST48, OST4, DAD1 and TMEM258, either STT3A or STT3B as catalytic subunits, and form-specific accessory subunits. STT3A complex assembly occurs through the formation of 3 subcomplexes. Subcomplex 1 contains RPN1 and TMEM258, subcomplex 2 contains the STT3A-specific subunits STT3A, DC2/OSTC, and KCP2 as well as the core subunit OST4, and subcomplex 3 contains RPN2, DAD1, and OST48. The STT3A complex can form stable complexes with the Sec61 complex or with both the Sec61 and TRAP complexes.

It localises to the membrane. Its subcellular location is the endoplasmic reticulum. The protein localises to the cytoplasm. It participates in protein modification; protein glycosylation. In terms of biological role, subunit of the oligosaccharyl transferase (OST) complex that catalyzes the initial transfer of a defined glycan (Glc(3)Man(9)GlcNAc(2) in eukaryotes) from the lipid carrier dolichol-pyrophosphate to an asparagine residue within an Asn-X-Ser/Thr consensus motif in nascent polypeptide chains, the first step in protein N-glycosylation. N-glycosylation occurs cotranslationally and the complex associates with the Sec61 complex at the channel-forming translocon complex that mediates protein translocation across the endoplasmic reticulum (ER). All subunits are required for a maximal enzyme activity. Involved in ER homeostasis in the colonic epithelium. The polypeptide is Dolichyl-diphosphooligosaccharide--protein glycosyltransferase subunit TMEM258 (Bos taurus (Bovine)).